The following is a 221-amino-acid chain: 2-C-methyl-D-erythritol 4-phosphate cytidylyltransferase (221 aa).

It belongs to the IspD/TarI cytidylyltransferase family. IspD subfamily.

The catalysed reaction is 2-C-methyl-D-erythritol 4-phosphate + CTP + H(+) = 4-CDP-2-C-methyl-D-erythritol + diphosphate. The protein operates within isoprenoid biosynthesis; isopentenyl diphosphate biosynthesis via DXP pathway; isopentenyl diphosphate from 1-deoxy-D-xylulose 5-phosphate: step 2/6. Catalyzes the formation of 4-diphosphocytidyl-2-C-methyl-D-erythritol from CTP and 2-C-methyl-D-erythritol 4-phosphate (MEP). In Roseobacter denitrificans (strain ATCC 33942 / OCh 114) (Erythrobacter sp. (strain OCh 114)), this protein is 2-C-methyl-D-erythritol 4-phosphate cytidylyltransferase.